A 404-amino-acid chain; its full sequence is p-hydroxybenzoate hydroxylase (404 aa).

FAD contacts are provided by residues E35, 45 to 50 (RIRAGI), and Q105. Residues Y203, 214-216 (SMR), and Y224 contribute to the substrate site. Position 288 (D288) interacts with FAD. P295 serves as a coordination point for substrate. 301–302 (LN) provides a ligand contact to FAD.

It belongs to the aromatic-ring hydroxylase family. Homodimer. FAD serves as cofactor.

It carries out the reaction 4-hydroxybenzoate + NADPH + O2 + H(+) = 3,4-dihydroxybenzoate + NADP(+) + H2O. It participates in aromatic compound metabolism; benzoate degradation via hydroxylation; 3,4-dihydroxybenzoate from benzoate: step 2/2. Catalyzes the incorporation of an atom of dioxygen into p-hydroxybenzoate (p-OHB) to form 3,4-dihydroxybenzoate (3,4DOHB). The reaction occurs in two parts: reduction of the flavin adenine dinucleotide (FAD) in the enzyme by reduced nicotinamide adenine dinucleotide phosphate (NADPH) in response to binding p-hydroxybenzoate to the enzyme and oxidation of reduced FAD with oxygen to form a hydroperoxide, which then oxygenates p-hydroxybenzoate. In Acinetobacter baylyi (strain ATCC 33305 / BD413 / ADP1), this protein is p-hydroxybenzoate hydroxylase (pobA).